Here is a 219-residue protein sequence, read N- to C-terminus: Cytidylate kinase (219 aa).

9–17 provides a ligand contact to ATP; that stretch reads GPAGSGKTT.

Belongs to the cytidylate kinase family. Type 1 subfamily.

Its subcellular location is the cytoplasm. It catalyses the reaction CMP + ATP = CDP + ADP. It carries out the reaction dCMP + ATP = dCDP + ADP. The chain is Cytidylate kinase from Fervidobacterium nodosum (strain ATCC 35602 / DSM 5306 / Rt17-B1).